We begin with the raw amino-acid sequence, 130 residues long: Small ribosomal subunit protein uS9 (130 aa).

The protein belongs to the universal ribosomal protein uS9 family.

The protein is Small ribosomal subunit protein uS9 (rpsI) of Geobacillus stearothermophilus (Bacillus stearothermophilus).